Consider the following 68-residue polypeptide: Serine rich endogenous peptide 13 (68 aa).

Residues 1 to 31 (MATKASNLVVFLLSLLLLFLLISFQVGVADA) form the signal peptide. The interval 33-68 (RNKRQGQEQRVDYDYPRPPTAPIYLPPSKSRKGKGP) is disordered. Residues 37-47 (QGQEQRVDYDY) are compositionally biased toward basic and acidic residues. The span at 48 to 57 (PRPPTAPIYL) shows a compositional bias: pro residues. Positions 54-68 (PIYLPPSKSRKGKGP) match the SCOOP motif motif. The SxS motif essential for MIK2 binding signature appears at 60–62 (SKS).

The protein belongs to the serine rich endogenous peptide (SCOOP) phytocytokine family. Interacts with MIK2 (via extracellular leucine-rich repeat domain); this interaction triggers the formation of complex between MIK2 and the BAK1/SERK3 and SERK4 coreceptors, and subsequent BAK1 activation by phosphorylation. In terms of tissue distribution, mostly expressed in stems and flowers and, to a lower extent, in seedlings shoots, roots, siliques, seeds and leaves.

Its subcellular location is the cell membrane. It is found in the secreted. The protein resides in the extracellular space. It localises to the apoplast. In terms of biological role, brassicaceae-specific phytocytokine (plant endogenous peptide released into the apoplast) perceived by MIK2 in a BAK1/SERK3 and SERK4 coreceptors-dependent manner, that modulates various physiological and antimicrobial processes including growth prevention and reactive oxygen species (ROS) response regulation. Promotes the expression of immune-related marker genes (e.g. WRKY30, WRKY33 and CYP81F2) in a MIK2-dependent manner. Inhibits root growth and regulates root meristems. Prevents general growth and development. Exhibits antibacterial effects against Pseudomonas syringae pv. tomato DC3000, Ralstonia solanacearum, Bacillus subtilis and Agrobacterium tumefaciens, thus being an antimicrobial peptide (AMP). In Arabidopsis thaliana (Mouse-ear cress), this protein is Serine rich endogenous peptide 13.